Consider the following 343-residue polypeptide: Ribosomal RNA small subunit methyltransferase H (343 aa).

S-adenosyl-L-methionine is bound by residues 39–41, D58, F87, D108, and Q115; that span reads AGH.

It belongs to the methyltransferase superfamily. RsmH family.

The protein localises to the cytoplasm. The enzyme catalyses cytidine(1402) in 16S rRNA + S-adenosyl-L-methionine = N(4)-methylcytidine(1402) in 16S rRNA + S-adenosyl-L-homocysteine + H(+). Its function is as follows. Specifically methylates the N4 position of cytidine in position 1402 (C1402) of 16S rRNA. This is Ribosomal RNA small subunit methyltransferase H from Bifidobacterium adolescentis (strain ATCC 15703 / DSM 20083 / NCTC 11814 / E194a).